The sequence spans 471 residues: GTPase Der (471 aa).

EngA-type G domains are found at residues 3-166 and 177-350; these read PTLA…EPEA and IKLA…SSAT. GTP contacts are provided by residues 9–16, 56–60, 118–121, 183–190, 230–234, and 295–298; these read GRPNVGKS, DTGGI, NKVD, DTAGV, and NKWD. Residues 351–435 enclose the KH-like domain; that stretch reads EKLNTNFLTK…PIRFEFKSSE (85 aa). The segment at 432 to 471 is disordered; sequence KSSENPFAGRKNAMSKKPEHPSRRANSGGKSINRRPRPKS.

Belongs to the TRAFAC class TrmE-Era-EngA-EngB-Septin-like GTPase superfamily. EngA (Der) GTPase family. As to quaternary structure, associates with the 50S ribosomal subunit.

GTPase that plays an essential role in the late steps of ribosome biogenesis. This Saccharophagus degradans (strain 2-40 / ATCC 43961 / DSM 17024) protein is GTPase Der.